A 93-amino-acid chain; its full sequence is Large ribosomal subunit protein eL42 (93 aa).

Zn(2+) contacts are provided by Cys-11, Cys-14, Cys-72, and Cys-75. A C4-type zinc finger spans residues 11 to 75 (CPHCHSHFEH…TDLKYRCSEC (65 aa)).

Belongs to the eukaryotic ribosomal protein eL42 family. As to quaternary structure, part of the 50S ribosomal subunit. Requires Zn(2+) as cofactor.

Its function is as follows. Binds to the 23S rRNA. This Natronomonas pharaonis (strain ATCC 35678 / DSM 2160 / CIP 103997 / JCM 8858 / NBRC 14720 / NCIMB 2260 / Gabara) (Halobacterium pharaonis) protein is Large ribosomal subunit protein eL42 (rpl44e).